Reading from the N-terminus, the 279-residue chain is Tryptophan 2,3-dioxygenase (279 aa).

Substrate is bound by residues 48 to 52 (FIVIH), Y110, and R114. H237 is a binding site for heme. Residue T251 participates in substrate binding.

It belongs to the tryptophan 2,3-dioxygenase family. Homotetramer. It depends on heme as a cofactor.

It carries out the reaction L-tryptophan + O2 = N-formyl-L-kynurenine. The protein operates within amino-acid degradation; L-tryptophan degradation via kynurenine pathway; L-kynurenine from L-tryptophan: step 1/2. Functionally, heme-dependent dioxygenase that catalyzes the oxidative cleavage of the L-tryptophan (L-Trp) pyrrole ring and converts L-tryptophan to N-formyl-L-kynurenine. Catalyzes the oxidative cleavage of the indole moiety. The sequence is that of Tryptophan 2,3-dioxygenase from Bacillus anthracis.